Reading from the N-terminus, the 195-residue chain is Holliday junction branch migration complex subunit RuvA (195 aa).

Residues 1 to 64 (MIGRIAGLLL…EDAHLLFGFM (64 aa)) form a domain I region. A domain II region spans residues 65–140 (TEPERVLFRQ…KISPAITLPE (76 aa)). Residues 140 to 144 (ETGTA) are flexible linker. The segment at 145 to 195 (MASSTDKDILNALSALGYNDREANWAVGQLSEGVTVSDGIMQSLRLLSKAK) is domain III.

This sequence belongs to the RuvA family. In terms of assembly, homotetramer. Forms an RuvA(8)-RuvB(12)-Holliday junction (HJ) complex. HJ DNA is sandwiched between 2 RuvA tetramers; dsDNA enters through RuvA and exits via RuvB. An RuvB hexamer assembles on each DNA strand where it exits the tetramer. Each RuvB hexamer is contacted by two RuvA subunits (via domain III) on 2 adjacent RuvB subunits; this complex drives branch migration. In the full resolvosome a probable DNA-RuvA(4)-RuvB(12)-RuvC(2) complex forms which resolves the HJ.

The protein localises to the cytoplasm. In terms of biological role, the RuvA-RuvB-RuvC complex processes Holliday junction (HJ) DNA during genetic recombination and DNA repair, while the RuvA-RuvB complex plays an important role in the rescue of blocked DNA replication forks via replication fork reversal (RFR). RuvA specifically binds to HJ cruciform DNA, conferring on it an open structure. The RuvB hexamer acts as an ATP-dependent pump, pulling dsDNA into and through the RuvAB complex. HJ branch migration allows RuvC to scan DNA until it finds its consensus sequence, where it cleaves and resolves the cruciform DNA. The chain is Holliday junction branch migration complex subunit RuvA from Nitrosomonas europaea (strain ATCC 19718 / CIP 103999 / KCTC 2705 / NBRC 14298).